The following is a 688-amino-acid chain: Elongation factor G (688 aa).

Residues 8–282 enclose the tr-type G domain; sequence ERTRNIGIMA…AVLDYLPAPT (275 aa). GTP contacts are provided by residues 17–24, 81–85, and 135–138; these read AHIDAGKT, DTPGH, and NKMD.

It belongs to the TRAFAC class translation factor GTPase superfamily. Classic translation factor GTPase family. EF-G/EF-2 subfamily.

Its subcellular location is the cytoplasm. Catalyzes the GTP-dependent ribosomal translocation step during translation elongation. During this step, the ribosome changes from the pre-translocational (PRE) to the post-translocational (POST) state as the newly formed A-site-bound peptidyl-tRNA and P-site-bound deacylated tRNA move to the P and E sites, respectively. Catalyzes the coordinated movement of the two tRNA molecules, the mRNA and conformational changes in the ribosome. In Clostridioides difficile (strain 630) (Peptoclostridium difficile), this protein is Elongation factor G.